The sequence spans 340 residues: N-acetyl-gamma-glutamyl-phosphate reductase (340 aa).

The active site involves cysteine 149.

The protein belongs to the NAGSA dehydrogenase family. Type 1 subfamily.

The protein localises to the cytoplasm. The enzyme catalyses N-acetyl-L-glutamate 5-semialdehyde + phosphate + NADP(+) = N-acetyl-L-glutamyl 5-phosphate + NADPH + H(+). It functions in the pathway amino-acid biosynthesis; L-arginine biosynthesis; N(2)-acetyl-L-ornithine from L-glutamate: step 3/4. Catalyzes the NADPH-dependent reduction of N-acetyl-5-glutamyl phosphate to yield N-acetyl-L-glutamate 5-semialdehyde. The polypeptide is N-acetyl-gamma-glutamyl-phosphate reductase (Vesicomyosocius okutanii subsp. Calyptogena okutanii (strain HA)).